The sequence spans 204 residues: Thiamine-phosphate synthase (204 aa).

Residues 28-32 (QLRIK) and N60 each bind 4-amino-2-methyl-5-(diphosphooxymethyl)pyrimidine. Residues D61 and D80 each contribute to the Mg(2+) site. 4-amino-2-methyl-5-(diphosphooxymethyl)pyrimidine-binding residues include S99 and K128. 2-[(2R,5Z)-2-carboxy-4-methylthiazol-5(2H)-ylidene]ethyl phosphate-binding positions include G157 and 177 to 178 (VT).

It belongs to the thiamine-phosphate synthase family. It depends on Mg(2+) as a cofactor.

It carries out the reaction 2-[(2R,5Z)-2-carboxy-4-methylthiazol-5(2H)-ylidene]ethyl phosphate + 4-amino-2-methyl-5-(diphosphooxymethyl)pyrimidine + 2 H(+) = thiamine phosphate + CO2 + diphosphate. It catalyses the reaction 2-(2-carboxy-4-methylthiazol-5-yl)ethyl phosphate + 4-amino-2-methyl-5-(diphosphooxymethyl)pyrimidine + 2 H(+) = thiamine phosphate + CO2 + diphosphate. The catalysed reaction is 4-methyl-5-(2-phosphooxyethyl)-thiazole + 4-amino-2-methyl-5-(diphosphooxymethyl)pyrimidine + H(+) = thiamine phosphate + diphosphate. Its pathway is cofactor biosynthesis; thiamine diphosphate biosynthesis; thiamine phosphate from 4-amino-2-methyl-5-diphosphomethylpyrimidine and 4-methyl-5-(2-phosphoethyl)-thiazole: step 1/1. In terms of biological role, condenses 4-methyl-5-(beta-hydroxyethyl)thiazole monophosphate (THZ-P) and 2-methyl-4-amino-5-hydroxymethyl pyrimidine pyrophosphate (HMP-PP) to form thiamine monophosphate (TMP). This is Thiamine-phosphate synthase from Rhizobium etli (strain ATCC 51251 / DSM 11541 / JCM 21823 / NBRC 15573 / CFN 42).